The following is a 1244-amino-acid chain: Superkiller complex protein 2 (1244 aa).

A disordered region spans residues 218-249 (LDLSGGDEDEGEAAGGPRGDNASPSPSGTPLV). 2 positions are modified to phosphoserine: Ser-242 and Ser-253. Residues 316 to 472 (ILHLEQHDSV…WIGRLKRRQI (157 aa)) enclose the Helicase ATP-binding domain. 329-336 (AHTSAGKT) lines the ATP pocket. Residues 420 to 423 (DEVH) carry the DEVH box motif. The Helicase C-terminal domain occupies 582–752 (GLTSLDLTTS…LTYTMILNLL (171 aa)).

Belongs to the helicase family. SKI2 subfamily. In terms of assembly, component of the SKI complex which consists of SKIC2, SKIC3 and SKIC8. Interacts with HBS1L isoform 2.

Its subcellular location is the nucleus. It is found in the cytoplasm. The enzyme catalyses ATP + H2O = ADP + phosphate + H(+). Its function is as follows. Helicase component of the SKI complex, a multiprotein complex that assists the RNA-degrading exosome during the mRNA decay and quality-control pathways. The SKI complex catalyzes mRNA extraction from 80S ribosomal complexes in the 3'-5' direction and channels mRNA to the cytosolic exosome for degradation. SKI-mediated extraction of mRNA from stalled ribosomes allow binding of the Pelota-HBS1L complex and subsequent ribosome disassembly by ABCE1 for ribosome recycling. In the nucleus, the SKI complex associates with transcriptionally active genes in a manner dependent on PAF1 complex (PAF1C). This chain is Superkiller complex protein 2, found in Mus musculus (Mouse).